Here is a 127-residue protein sequence, read N- to C-terminus: uncharacterized protein (127 aa).

It is found in the mitochondrion. This is an uncharacterized protein from Arabidopsis thaliana (Mouse-ear cress).